The sequence spans 286 residues: MAGAKEIKTKIASVKNTQKITSAMEMVAASKMRRAQDRMTASRPYAESMRKVIGHVAQGSLEYKHPYLEVREAKRVGYIVVASDRGLCGGLNVNLFKKVVSDVKNWKAQGVEVEFCPIGARSVQFFKAFGGKVQAHASGLGDAPKLADLIGTVRVMLQAYNEGKLDRLYVVFNKFVNTMTQTPVIEQLLPLPKSEDDEIAHHWDYIYEQDPKDLLDTLLVRYVESQVYQGVVENIASEQAARMVAMKAATDNAGTLIDDLQLVYNKARQAAITQELSEIVSGAAAV.

Belongs to the ATPase gamma chain family. F-type ATPases have 2 components, CF(1) - the catalytic core - and CF(0) - the membrane proton channel. CF(1) has five subunits: alpha(3), beta(3), gamma(1), delta(1), epsilon(1). CF(0) has three main subunits: a, b and c.

Its subcellular location is the cell inner membrane. In terms of biological role, produces ATP from ADP in the presence of a proton gradient across the membrane. The gamma chain is believed to be important in regulating ATPase activity and the flow of protons through the CF(0) complex. This Shewanella amazonensis (strain ATCC BAA-1098 / SB2B) protein is ATP synthase gamma chain.